We begin with the raw amino-acid sequence, 559 residues long: Berberine bridge enzyme-like A (559 aa).

Positions 1–21 (MFPLIILISFSLASLSETATG) are cleaved as a signal peptide. N-linked (GlcNAc...) asparagine glycans are attached at residues N25 and N37. C29 and C86 are oxidised to a cystine. The FAD-binding PCMH-type domain maps to 64–240 (FMPKPTFIIL…YAWKIRLLKV (177 aa)). H101 carries the post-translational modification Pros-8alpha-FAD histidine. Residues N321, N355, and N494 are each glycosylated (N-linked (GlcNAc...) asparagine).

The protein belongs to the oxygen-dependent FAD-linked oxidoreductase family. FAD serves as cofactor. In terms of tissue distribution, mostly expressed in roots.

It is found in the vacuole. It participates in alkaloid biosynthesis; nicotine biosynthesis. Involved in the biosynthesis of pyridine alkaloid natural products, leading mainly to the production of anabasine, anatabine, nicotine and nornicotine, effective deterrents against herbivores with antiparasitic and pesticide properties (neurotoxins); nornicotine serves as the precursor in the synthesis of the carcinogen compound N'-nitrosonornicotine (NNN). Catalyzes a late oxidation step subsequent to the pyridine ring condensation reaction in the biosynthesis of alkaloids. The protein is Berberine bridge enzyme-like A of Nicotiana tabacum (Common tobacco).